A 368-amino-acid polypeptide reads, in one-letter code: DNA replication and repair protein RecF (368 aa).

30-37 contributes to the ATP binding site; that stretch reads GDNGAGKT.

This sequence belongs to the RecF family.

It localises to the cytoplasm. In terms of biological role, the RecF protein is involved in DNA metabolism; it is required for DNA replication and normal SOS inducibility. RecF binds preferentially to single-stranded, linear DNA. It also seems to bind ATP. This chain is DNA replication and repair protein RecF, found in Xanthomonas euvesicatoria pv. vesicatoria (strain 85-10) (Xanthomonas campestris pv. vesicatoria).